Here is a 250-residue protein sequence, read N- to C-terminus: Probable aquaporin TIP-type RB7-18C (250 aa).

2 helical membrane-spanning segments follow: residues Ala20–Tyr42 and Gly55–Ile77. The NPA 1 motif lies at Asn83 to Ala85. Helical transmembrane passes span Thr97–Leu119, Phe140–Ala162, and Ile172–Gly194. The short motif at Asn197 to Ala199 is the NPA 2 element. The helical transmembrane segment at Trp215–Ile237 threads the bilayer.

It belongs to the MIP/aquaporin (TC 1.A.8) family. TIP (TC 1.A.8.10) subfamily. Roots.

Its subcellular location is the vacuole membrane. Functionally, channel protein in tonoplast. These proteins may allow the diffusion of amino acids and/or peptides from the vacuolar compartment to the cytoplasm. This is Probable aquaporin TIP-type RB7-18C from Nicotiana tabacum (Common tobacco).